The following is a 404-amino-acid chain: S-adenosylmethionine synthase (404 aa).

Histidine 17 is an ATP binding site. Aspartate 19 lines the Mg(2+) pocket. Glutamate 45 is a binding site for K(+). L-methionine-binding residues include glutamate 58 and glutamine 101. The flexible loop stretch occupies residues 101 to 111; it reads QSADINRGVDR. ATP contacts are provided by residues 172–174, 245–246, aspartate 254, 260–261, alanine 277, and lysine 281; these read DAK, RF, and RK. Residue aspartate 254 participates in L-methionine binding. Residue lysine 285 coordinates L-methionine.

Belongs to the AdoMet synthase family. As to quaternary structure, homotetramer; dimer of dimers. Requires Mg(2+) as cofactor. The cofactor is K(+).

The protein resides in the cytoplasm. The catalysed reaction is L-methionine + ATP + H2O = S-adenosyl-L-methionine + phosphate + diphosphate. It functions in the pathway amino-acid biosynthesis; S-adenosyl-L-methionine biosynthesis; S-adenosyl-L-methionine from L-methionine: step 1/1. Catalyzes the formation of S-adenosylmethionine (AdoMet) from methionine and ATP. The overall synthetic reaction is composed of two sequential steps, AdoMet formation and the subsequent tripolyphosphate hydrolysis which occurs prior to release of AdoMet from the enzyme. This Chlorobium luteolum (strain DSM 273 / BCRC 81028 / 2530) (Pelodictyon luteolum) protein is S-adenosylmethionine synthase.